We begin with the raw amino-acid sequence, 111 residues long: U-scoloptoxin(16)-Sm2a (111 aa).

A signal peptide spans 1–28 (MCAKPNHLFVTVTFIFGFAVCIVQISAW).

This sequence belongs to the scoloptoxin-16 family. In terms of processing, contains 4 disulfide bonds. In terms of tissue distribution, expressed by the venom gland.

The protein localises to the secreted. This is U-scoloptoxin(16)-Sm2a from Scolopendra morsitans (Tanzanian blue ringleg centipede).